Here is a 158-residue protein sequence, read N- to C-terminus: Ribosome maturation factor RimP (158 aa).

The protein belongs to the RimP family.

The protein localises to the cytoplasm. Functionally, required for maturation of 30S ribosomal subunits. The chain is Ribosome maturation factor RimP from Pseudomonas syringae pv. tomato (strain ATCC BAA-871 / DC3000).